The chain runs to 418 residues: Glutamyl-tRNA(Gln) amidotransferase subunit D (418 aa).

Residues 74–405 (KNISILSTGG…EESKELMSKN (332 aa)) enclose the Asparaginase/glutaminase domain. Catalysis depends on residues Thr84, Thr160, Asp161, and Lys237.

The protein belongs to the asparaginase 1 family. GatD subfamily. In terms of assembly, heterodimer of GatD and GatE.

The catalysed reaction is L-glutamyl-tRNA(Gln) + L-glutamine + ATP + H2O = L-glutaminyl-tRNA(Gln) + L-glutamate + ADP + phosphate + H(+). In terms of biological role, allows the formation of correctly charged Gln-tRNA(Gln) through the transamidation of misacylated Glu-tRNA(Gln) in organisms which lack glutaminyl-tRNA synthetase. The reaction takes place in the presence of glutamine and ATP through an activated gamma-phospho-Glu-tRNA(Gln). The GatDE system is specific for glutamate and does not act on aspartate. The chain is Glutamyl-tRNA(Gln) amidotransferase subunit D from Methanococcus maripaludis (strain C5 / ATCC BAA-1333).